The sequence spans 205 residues: Cytochrome c oxidase subunit 3 (205 aa).

The next 5 membrane-spanning stretches (helical) occupy residues G28–F48, A72–A92, W104–F124, F142–V162, and S184–I204.

Belongs to the cytochrome c oxidase subunit 3 family. In terms of assembly, associates with subunits I, II and IV to form cytochrome c oxidase.

The protein localises to the cell membrane. It carries out the reaction 4 Fe(II)-[cytochrome c] + O2 + 8 H(+)(in) = 4 Fe(III)-[cytochrome c] + 2 H2O + 4 H(+)(out). The sequence is that of Cytochrome c oxidase subunit 3 (ctaE) from Corynebacterium diphtheriae (strain ATCC 700971 / NCTC 13129 / Biotype gravis).